The primary structure comprises 238 residues: Orotidine 5'-phosphate decarboxylase (238 aa).

Residues Asp-10, Lys-32, Asp-59–Thr-68, Thr-122, Arg-184, Gln-193, Gly-213, and Arg-214 contribute to the substrate site. The Proton donor role is filled by Lys-61.

The protein belongs to the OMP decarboxylase family. Type 1 subfamily. As to quaternary structure, homodimer.

The catalysed reaction is orotidine 5'-phosphate + H(+) = UMP + CO2. The protein operates within pyrimidine metabolism; UMP biosynthesis via de novo pathway; UMP from orotate: step 2/2. Its function is as follows. Catalyzes the decarboxylation of orotidine 5'-monophosphate (OMP) to uridine 5'-monophosphate (UMP). This Bacillus cereus (strain B4264) protein is Orotidine 5'-phosphate decarboxylase.